We begin with the raw amino-acid sequence, 97 residues long: Small integral membrane protein 8 (97 aa).

Positions 1–14 (MSSPSSESSNAKSS) are enriched in low complexity. Residues 1–26 (MSSPSSESSNAKSSPPKEEYRTPGLR) form a disordered region. A helical transmembrane segment spans residues 49 to 69 (VMVFGIVTITMCVAYIAYLHA).

Belongs to the SMIM8 family.

It is found in the membrane. The chain is Small integral membrane protein 8 (smim8) from Xenopus tropicalis (Western clawed frog).